The chain runs to 409 residues: MKEKVVLAYSGGLDTSVILKWLCEKGFDVIAYVANVGQKDDFDAIKEKALKTGASKVYVEDLRREFVTDYIFTALLGNAMYEGRYLLGTAIARPLIAKRQVEIAEKEGAQYVAHGATGKGNDQVRFELTYAALNPNLKVISPWKDPEFLAKFKGRTDLINYAMEKGIPIKVSKKRPYSEDENLMHISHEAGKLEDPAYIPDEDVFTWTVSPKDAPDEETLLEIHFENGIPVKVVNLKDGTEKTDPLELFEYLNEVGAKNGVGRLDMVENRFIGIKSRGVYETPGATILWTAHRDLEGITMDKEVMHLRDMLAPKFAELIYNGFWFSPEMEFLLAAFRKAQENVTGKVTVSIYKGNVMPVARYSPYSLYNPELSSMDVEGGFNATDSKGFINIHALRLKVHQLVKKGYQK.

ATP contacts are provided by residues 8-16 (AYSGGLDTS) and A34. Y85 serves as a coordination point for L-citrulline. G115 provides a ligand contact to ATP. Residues T117, N121, and D122 each contribute to the L-aspartate site. N121 lines the L-citrulline pocket. 5 residues coordinate L-citrulline: R125, S178, S187, E268, and Y280.

The protein belongs to the argininosuccinate synthase family. Type 1 subfamily. In terms of assembly, homotetramer.

It is found in the cytoplasm. The enzyme catalyses L-citrulline + L-aspartate + ATP = 2-(N(omega)-L-arginino)succinate + AMP + diphosphate + H(+). Its pathway is amino-acid biosynthesis; L-arginine biosynthesis; L-arginine from L-ornithine and carbamoyl phosphate: step 2/3. The sequence is that of Argininosuccinate synthase from Thermotoga sp. (strain RQ2).